A 589-amino-acid polypeptide reads, in one-letter code: Arginine--tRNA ligase (589 aa).

A 'HIGH' region motif is present at residues Ala131–His141.

The protein belongs to the class-I aminoacyl-tRNA synthetase family. As to quaternary structure, monomer.

It is found in the cytoplasm. It carries out the reaction tRNA(Arg) + L-arginine + ATP = L-arginyl-tRNA(Arg) + AMP + diphosphate. The sequence is that of Arginine--tRNA ligase from Legionella pneumophila subsp. pneumophila (strain Philadelphia 1 / ATCC 33152 / DSM 7513).